Reading from the N-terminus, the 68-residue chain is Probable tautomerase jhp_0858 (68 aa).

The active-site Proton acceptor; via imino nitrogen is the Pro-2.

It belongs to the 4-oxalocrotonate tautomerase family.

The chain is Probable tautomerase jhp_0858 from Helicobacter pylori (strain J99 / ATCC 700824) (Campylobacter pylori J99).